Consider the following 830-residue polypeptide: Periplasmic nitrate reductase (830 aa).

A signal peptide (tat-type signal) is located at residues 1-32; that stretch reads MELNRRDFMKANAAVAAAAAAGITIPVKNVHA. The 4Fe-4S Mo/W bis-MGD-type domain occupies 39-95; sequence IRWDKAPCRYCGTGCSVLVGTKDGRVVATQGDPDAEVNRGLNCIKGYFLSKIMYGAD. Positions 46, 49, 53, and 81 each coordinate [4Fe-4S] cluster. Residues Lys83, Gln151, Asn176, Cys180, 213 to 220, 244 to 248, Met374, Gln378, Asn484, 510 to 511, Lys533, Asp560, and 720 to 729 contribute to the Mo-bis(molybdopterin guanine dinucleotide) site; these read WGSNMAEM, STFEH, SD, and TGRVLEHWHT. Phe796 provides a ligand contact to substrate. Residues Asn804 and Lys821 each contribute to the Mo-bis(molybdopterin guanine dinucleotide) site.

The protein belongs to the prokaryotic molybdopterin-containing oxidoreductase family. NasA/NapA/NarB subfamily. As to quaternary structure, component of the periplasmic nitrate reductase NapAB complex composed of NapA and NapB. The cofactor is [4Fe-4S] cluster. Mo-bis(molybdopterin guanine dinucleotide) serves as cofactor. Predicted to be exported by the Tat system. The position of the signal peptide cleavage has not been experimentally proven.

The protein localises to the periplasm. The enzyme catalyses 2 Fe(II)-[cytochrome] + nitrate + 2 H(+) = 2 Fe(III)-[cytochrome] + nitrite + H2O. Functionally, catalytic subunit of the periplasmic nitrate reductase complex NapAB. Receives electrons from NapB and catalyzes the reduction of nitrate to nitrite. The polypeptide is Periplasmic nitrate reductase (Mannheimia succiniciproducens (strain KCTC 0769BP / MBEL55E)).